The following is a 129-amino-acid chain: Glycine cleavage system H protein (129 aa).

In terms of domain architecture, Lipoyl-binding spans 24–106; the sequence is LLKIGVSEFA…IGDGWLVILK (83 aa). Lysine 65 bears the N6-lipoyllysine mark.

The protein belongs to the GcvH family. The glycine cleavage system is composed of four proteins: P, T, L and H. It depends on (R)-lipoate as a cofactor.

The glycine cleavage system catalyzes the degradation of glycine. The H protein shuttles the methylamine group of glycine from the P protein to the T protein. This chain is Glycine cleavage system H protein, found in Prochlorococcus marinus (strain MIT 9301).